The sequence spans 276 residues: SRR1-like protein (276 aa).

At S30 the chain carries Phosphoserine. Y34 bears the Phosphotyrosine mark.

It belongs to the SRR1 family.

In terms of biological role, possible regulator involved in a circadian clock input pathway. This Drosophila melanogaster (Fruit fly) protein is SRR1-like protein.